The following is a 168-amino-acid chain: Plastocyanin, chloroplastic (168 aa).

Residues 1–69 (MATVTSTTVA…SAVLASNALA (69 aa)) constitute a chloroplast transit peptide. The 99-residue stretch at 70-168 (VEVLLGASDG…AGMVGQVTVN (99 aa)) folds into the Plastocyanin-like domain. Residues His106, Cys153, His156, and Met161 each coordinate Cu cation.

The protein belongs to the plastocyanin family. Cu(2+) is required as a cofactor.

Its subcellular location is the plastid. It localises to the chloroplast thylakoid membrane. Functionally, participates in electron transfer between P700 and the cytochrome b6-f complex in photosystem I. The polypeptide is Plastocyanin, chloroplastic (PETE) (Pisum sativum (Garden pea)).